Consider the following 328-residue polypeptide: Probable cell division protein WhiA (328 aa).

Positions 273–306 form a DNA-binding region, H-T-H motif; sequence SLEELGALADPPLTKDAVAGRIRRLLAMADKRAS.

This sequence belongs to the WhiA family. As to quaternary structure, monomer in solution.

In terms of biological role, involved in cell division and chromosome segregation. Involved in sporulation. May coordinate the cessation of aerial hyphae growth and subsequent chromosome segregation and/or septation. Required for expression of the ParB partioning protein during sporogenesis. Activates its own transcription and represses WhiB. Binds with low affinity to its own promoter and to the Parp2 sporulation-specific promoter. Also binds directly to the RNA polymerase sigma factor WhiG, leading to inhibition of WhiG-dependent transcription in a dose-dependent manner. The polypeptide is Probable cell division protein WhiA (Streptomyces coelicolor (strain ATCC BAA-471 / A3(2) / M145)).